A 100-amino-acid chain; its full sequence is Large ribosomal subunit protein bL21 (100 aa).

This sequence belongs to the bacterial ribosomal protein bL21 family. Part of the 50S ribosomal subunit. Contacts protein L20.

Functionally, this protein binds to 23S rRNA in the presence of protein L20. This is Large ribosomal subunit protein bL21 from Mycoplasmoides gallisepticum (strain R(low / passage 15 / clone 2)) (Mycoplasma gallisepticum).